A 280-amino-acid polypeptide reads, in one-letter code: Ribosomal RNA small subunit methyltransferase A (280 aa).

6 residues coordinate S-adenosyl-L-methionine: His15, Leu17, Gly42, Glu64, Asp89, and Asn109.

This sequence belongs to the class I-like SAM-binding methyltransferase superfamily. rRNA adenine N(6)-methyltransferase family. RsmA subfamily.

Its subcellular location is the cytoplasm. It carries out the reaction adenosine(1518)/adenosine(1519) in 16S rRNA + 4 S-adenosyl-L-methionine = N(6)-dimethyladenosine(1518)/N(6)-dimethyladenosine(1519) in 16S rRNA + 4 S-adenosyl-L-homocysteine + 4 H(+). Specifically dimethylates two adjacent adenosines (A1518 and A1519) in the loop of a conserved hairpin near the 3'-end of 16S rRNA in the 30S particle. May play a critical role in biogenesis of 30S subunits. The sequence is that of Ribosomal RNA small subunit methyltransferase A from Synechococcus sp. (strain WH7803).